The primary structure comprises 512 residues: Glycerol kinase, glycosomal (512 aa).

T11 provides a ligand contact to substrate. Residue R15 participates in ATP binding. The substrate site is built by R84, Y139, and D254. Residues T276, G321, and 422 to 426 (GLSKN) each bind ATP. The Microbody targeting signal signature appears at 510–512 (AKL).

Belongs to the FGGY kinase family.

It localises to the glycosome. The enzyme catalyses glycerol + ATP = sn-glycerol 3-phosphate + ADP + H(+). It functions in the pathway polyol metabolism; glycerol degradation via glycerol kinase pathway; sn-glycerol 3-phosphate from glycerol: step 1/1. In terms of biological role, catalyzes the phosphorylation of glycerol using ATP. Under anoxic conditions, when glycerol 3-phosphate accumulates in the glycosome, it catalyzes the reverse reaction, maintaining the ATP balance. Key enzyme for the survival of bloodstream forms under anoxic conditions. The protein is Glycerol kinase, glycosomal (GK) of Trypanosoma brucei brucei.